A 334-amino-acid polypeptide reads, in one-letter code: Mitochondrial glycine transporter (334 aa).

Solcar repeat units lie at residues 22–106 (SKTT…LRQG), 135–219 (LSNW…LKRR), and 237–321 (SSSS…LILR). Helical transmembrane passes span 28 to 53 (FVAGLCSGLTSSILLQPADLLKTRVQ), 81 to 107 (GTLPSALRTGFGSALYFTSLNALRQGI), 141 to 166 (LATGAIARVAAGFVMMPVTVLKVRYE), 194 to 217 (GFGATAARDAPYAGLYVLFYEQLK), 241 to 267 (INFVSGGLAAGLATAITNPFDAVKTRL), and 296 to 314 (GLGLRITRKALSSALAWTV).

It belongs to the mitochondrial carrier (TC 2.A.29) family. SLC25A38 subfamily.

The protein resides in the mitochondrion inner membrane. It carries out the reaction glycine(in) = glycine(out). Functionally, mitochondrial glycine transporter that imports glycine into the mitochondrial matrix. Plays an important role in providing glycine for the first enzymatic step in heme biosynthesis, the condensation of glycine with succinyl-CoA to produce 5-aminolevulinate (ALA) in the mitochondrial matrix. This is Mitochondrial glycine transporter from Aspergillus clavatus (strain ATCC 1007 / CBS 513.65 / DSM 816 / NCTC 3887 / NRRL 1 / QM 1276 / 107).